The following is a 363-amino-acid chain: Adenosine kinase (363 aa).

Mg(2+) contacts are provided by A185, I188, and A191. D318 is a catalytic residue.

It belongs to the carbohydrate kinase PfkB family. The cofactor is Mg(2+).

The enzyme catalyses adenosine + ATP = AMP + ADP + H(+). Its pathway is purine metabolism; AMP biosynthesis via salvage pathway; AMP from adenosine: step 1/1. Its function is as follows. ATP-dependent phosphorylation of adenosine and other related nucleoside analogs to monophosphate derivatives. It is a key purine metabolic enzyme in the opportunistic parasitic protozoan toxoplasma gondii as it cannot synthesize purines de novo. The polypeptide is Adenosine kinase (AK) (Toxoplasma gondii).